A 498-amino-acid polypeptide reads, in one-letter code: Swainsonine transporter swnT (498 aa).

Residues Met1–Glu10 show a composition bias toward basic and acidic residues. Positions Met1 to Gln21 are disordered. 5 consecutive transmembrane segments (helical) span residues Leu42–Thr64, Leu79–Ile99, Ala126–Val146, Phe167–Leu187, and Ala193–Ala213. Residues Asn227 and Asn242 are each glycosylated (N-linked (GlcNAc...) asparagine). 6 consecutive transmembrane segments (helical) span residues Leu272–Val292, Ala316–Ile336, Pro370–Ala390, Leu398–Leu418, Gly436–Phe456, and Tyr469–Ala489.

This sequence belongs to the amino acid-polyamine-organocation (APC) superfamily. Amino acid/choline transporter (ACT) (TC 2.A.3.4) family.

It localises to the membrane. Functionally, transmembrane transporter; part of the gene cluster that mediates the biosynthesis of swainsonine, a cytotoxic fungal alkaloid and a potential cancer therapy drug. Does not mediate the secretion of SW and the exact role of swnT in SW biosynthesis remains to be determined. The protein is Swainsonine transporter swnT of Arthroderma benhamiae (strain ATCC MYA-4681 / CBS 112371) (Trichophyton mentagrophytes).